Consider the following 66-residue polypeptide: MDWNRVEGNWKQFKGNVKEKWGKLTDDDLDVIEGRRDQLEGKLQERYGYAKDQVRKDVDDWFTTLK.

It belongs to the UPF0337 (CsbD) family.

The protein is UPF0337 protein RPA4217 of Rhodopseudomonas palustris (strain ATCC BAA-98 / CGA009).